Reading from the N-terminus, the 506-residue chain is Trans-cinnamate 4-monooxygenase (506 aa).

The chain crosses the membrane as a helical span at residues 3-23; that stretch reads LLLLEKTLIGLFLAAVVAIAV. (E)-cinnamate-binding positions include 213 to 218 and Ala-307; that span reads RSRLAQ. Cys-448 is a heme binding site.

Belongs to the cytochrome P450 family. Requires heme as cofactor.

It localises to the membrane. The catalysed reaction is (E)-cinnamate + reduced [NADPH--hemoprotein reductase] + O2 = (E)-4-coumarate + oxidized [NADPH--hemoprotein reductase] + H2O + H(+). It participates in phenylpropanoid metabolism; trans-4-coumarate biosynthesis; trans-4-coumarate from trans-cinnamate: step 1/1. Its function is as follows. Catalyzes the first oxidative step of the phenylpropanoid pathway in higher plants by transforming trans-cinnamate into p-coumarate. The compounds formed by this pathway are essential components for lignification, pollination, and defense against ultraviolet light, predators and pathogens. The sequence is that of Trans-cinnamate 4-monooxygenase (CYP73A11) from Glycine max (Soybean).